The sequence spans 644 residues: Zinc finger protein 568 (644 aa).

The KRAB domain occupies 48–119; it reads VTFKDVAVDL…EEEMFGRHCP (72 aa). 15 C2H2-type zinc fingers span residues 222-244, 250-272, 278-300, 306-328, 334-356, 362-384, 390-412, 418-440, 446-468, 474-496, 502-524, 530-552, 558-580, 586-608, and 614-636; these read FKCN…ERIH, YECK…QKIH, YKCN…HRIH, YACK…ERIH, YECK…EKIH, YACN…MRSH, YKCN…MRSH, YVCS…MRNH, YECS…QRIH, YACT…EKIH, YHCN…EKIH, FKCN…VRSH, YECN…MRSH, and FECN…KRGH.

This sequence belongs to the krueppel C2H2-type zinc-finger protein family. As to quaternary structure, interacts with TRIM28.

Its subcellular location is the nucleus. In terms of biological role, has transcriptional repression activity, partially through the recruitment of the corepressor TRIM28 but also has repression activity independently of this interaction. Essential during embryonic development, where it acts as a direct repressor of a placental-specific transcript of IGF2 in early development and regulates convergent extension movements required for axis elongation and tissue morphogenesis in all germ layers. Also important for normal morphogenesis of extraembryonic tissues including the yolk sac, extraembryonic mesoderm and placenta. May enhance proliferation or maintenance of neural stem cells. This chain is Zinc finger protein 568 (ZNF568), found in Homo sapiens (Human).